Here is a 200-residue protein sequence, read N- to C-terminus: uncharacterized protein (200 aa).

Its function is as follows. Involved in osmoadaptation. This is an uncharacterized protein from Emericella nidulans (strain FGSC A4 / ATCC 38163 / CBS 112.46 / NRRL 194 / M139) (Aspergillus nidulans).